Here is a 95-residue protein sequence, read N- to C-terminus: Alpha-defensin 20 (95 aa).

An N-terminal signal peptide occupies residues 1–19; it reads MKTLVLLSALVLLAFQVQA. Positions 20–58 are excised as a propeptide; sequence DPIQNTDEETNTEEQPGEEDQAVSVSFGDPEGSALHEKS. Positions 22 to 57 are disordered; the sequence is IQNTDEETNTEEQPGEEDQAVSVSFGDPEGSALHEK. Positions 25 to 40 are enriched in acidic residues; the sequence is TDEETNTEEQPGEEDQ. 3 disulfide bridges follow: cysteine 64–cysteine 89, cysteine 66–cysteine 81, and cysteine 71–cysteine 88.

The protein belongs to the alpha-defensin family.

The protein resides in the secreted. Its function is as follows. May have microbicidal activities. This is Alpha-defensin 20 (Defa20) from Mus musculus (Mouse).